We begin with the raw amino-acid sequence, 631 residues long: Mini-chromosome maintenance complex-binding protein (631 aa).

2 stretches are compositionally biased toward polar residues: residues 148–157 and 173–192; these read ARVVPSTSYV and TQCQ…SESH. The segment at 148 to 218 is disordered; that stretch reads ARVVPSTSYV…SSSSHCTSSL (71 aa). A compositionally biased stretch (basic and acidic residues) spans 193–202; it reads GNTEPKRQET. Residues 206 to 217 show a composition bias toward low complexity; the sequence is SQDSSSSHCTSS.

It belongs to the MCMBP family. In terms of assembly, interacts with the mcm complex: associates with the mcm3-7 complex which lacks mcm2, while it does not interact with the mcm complex when mcm2 is present (mcm2-7 complex).

The protein localises to the nucleus. Functionally, associated component of the mcm complex that acts as a regulator of DNA replication. Binds to the MCM complex during late S phase and promotes the disassembly of the mcm complex from chromatin, thereby acting as a key regulator of pre-replication complex (pre-RC) unloading from replicated DNA. Can dissociate the mcm complex without addition of ATP; probably acts by destabilizing interactions of each individual subunits of the mcm complex. Required for sister chromatid cohesion. This is Mini-chromosome maintenance complex-binding protein (mcmbp) from Danio rerio (Zebrafish).